A 317-amino-acid chain; its full sequence is Acetyl-coenzyme A carboxylase carboxyl transferase subunit alpha (317 aa).

The CoA carboxyltransferase C-terminal domain occupies 39–293 (KLEDKNRKLT…KDALGASLER (255 aa)).

Belongs to the AccA family. Acetyl-CoA carboxylase is a heterohexamer composed of biotin carboxyl carrier protein (AccB), biotin carboxylase (AccC) and two subunits each of ACCase subunit alpha (AccA) and ACCase subunit beta (AccD).

Its subcellular location is the cytoplasm. The enzyme catalyses N(6)-carboxybiotinyl-L-lysyl-[protein] + acetyl-CoA = N(6)-biotinyl-L-lysyl-[protein] + malonyl-CoA. The protein operates within lipid metabolism; malonyl-CoA biosynthesis; malonyl-CoA from acetyl-CoA: step 1/1. Functionally, component of the acetyl coenzyme A carboxylase (ACC) complex. First, biotin carboxylase catalyzes the carboxylation of biotin on its carrier protein (BCCP) and then the CO(2) group is transferred by the carboxyltransferase to acetyl-CoA to form malonyl-CoA. In Chromohalobacter salexigens (strain ATCC BAA-138 / DSM 3043 / CIP 106854 / NCIMB 13768 / 1H11), this protein is Acetyl-coenzyme A carboxylase carboxyl transferase subunit alpha.